We begin with the raw amino-acid sequence, 591 residues long: MSSSSSSSPKEETYEEDREFESQAKRLKTEEGEIVYSAEESENRQEATPQAGSDSDSGGGDGGDGDGGSGGGGDGEEGEGGEEGDEGDGDEGGSGGDEGGSGGGPRSMPLSTEGGGSHHKVSVSPVVHVRGLCESVVEADLVEALEKFGTICYVMMMPFKRQALVEFENIDSAKECVTFAADVPVYIAGQQAFFNYSTSKRITRPGNTDDPSGGNKVLLLSIQNPLYPITVDVLYTVCNPVGKVQRIVIFKRNGIQAMVEFESVLCAQKAKAALNGADIYAGCCTLKIEYARPTRLNVIRNDNDSWDYTKPYLGRRDRGKGRQRQAILGDHPSSFRHDGYGSHGPLLPLPSRYRMGSRDTPELVAYPLPQASSSYMHGGSPSGSVVMVSGLHQLKMNCSRVFNLFCLYGNIEKVKFMKTIPGTALVEMGDEYAVERAVTHLNNVKLFGKRLNVCVSKQHSVVPSQIFELEDGTSSYKDFAMSKNNRFTSAGQASKNIIQPPSCVLHYYNVPLCVTEETFTKLCNDHEVLPFIKYKVFDAKASAKTLSGLLEWKCKTDAVEALTALNHYQIRVPNGSNPYTLKLCFSTSSHL.

Residues 1–120 (MSSSSSSSPK…STEGGGSHHK (120 aa)) form a disordered region. A compositionally biased stretch (basic and acidic residues) spans 20 to 31 (FESQAKRLKTEE). Lysine 28 participates in a covalent cross-link: Glycyl lysine isopeptide (Lys-Gly) (interchain with G-Cter in SUMO2). Serine 37 carries the phosphoserine modification. A Phosphothreonine modification is found at threonine 48. A compositionally biased stretch (gly residues) spans 57 to 73 (SGGGDGGDGDGGSGGGG). Residues 74–91 (DGEEGEGGEEGDEGDGDE) are compositionally biased toward acidic residues. Residues 92–105 (GGSGGDEGGSGGGP) are compositionally biased toward gly residues. A phosphoserine mark is found at serine 107, serine 117, and serine 124. RRM domains lie at 125 to 199 (PVVH…YSTS), 215 to 293 (NKVL…YARP), and 384 to 458 (SVVM…VSKQ). A Glycyl lysine isopeptide (Lys-Gly) (interchain with G-Cter in SUMO2) cross-link involves residue lysine 540.

Interacts with HNRNPL.

Its function is as follows. RNA-binding protein that functions as a regulator of alternative splicing for multiple target mRNAs, including PTPRC/CD45 and STAT5A. Required for alternative splicing of PTPRC. The sequence is that of Heterogeneous nuclear ribonucleoprotein L-like (Hnrnpll) from Mus musculus (Mouse).